The sequence spans 339 residues: Ketol-acid reductoisomerase (NADP(+)) (339 aa).

The 182-residue stretch at 1–182 (MRVYYDRDAD…GGGRSGIIET (182 aa)) folds into the KARI N-terminal Rossmann domain. NADP(+) is bound by residues 24 to 27 (YGSQ), R48, S51, T53, and 83 to 86 (DEHQ). H108 is a catalytic residue. Residue G134 coordinates NADP(+). One can recognise a KARI C-terminal knotted domain in the interval 183 to 328 (NFREECETDL…ARLRGMMPWI (146 aa)). Residues D191, E195, E227, and E231 each contribute to the Mg(2+) site. S252 serves as a coordination point for substrate.

The protein belongs to the ketol-acid reductoisomerase family. Requires Mg(2+) as cofactor.

The enzyme catalyses (2R)-2,3-dihydroxy-3-methylbutanoate + NADP(+) = (2S)-2-acetolactate + NADPH + H(+). It carries out the reaction (2R,3R)-2,3-dihydroxy-3-methylpentanoate + NADP(+) = (S)-2-ethyl-2-hydroxy-3-oxobutanoate + NADPH + H(+). The protein operates within amino-acid biosynthesis; L-isoleucine biosynthesis; L-isoleucine from 2-oxobutanoate: step 2/4. Its pathway is amino-acid biosynthesis; L-valine biosynthesis; L-valine from pyruvate: step 2/4. Functionally, involved in the biosynthesis of branched-chain amino acids (BCAA). Catalyzes an alkyl-migration followed by a ketol-acid reduction of (S)-2-acetolactate (S2AL) to yield (R)-2,3-dihydroxy-isovalerate. In the isomerase reaction, S2AL is rearranged via a Mg-dependent methyl migration to produce 3-hydroxy-3-methyl-2-ketobutyrate (HMKB). In the reductase reaction, this 2-ketoacid undergoes a metal-dependent reduction by NADPH to yield (R)-2,3-dihydroxy-isovalerate. This chain is Ketol-acid reductoisomerase (NADP(+)), found in Caulobacter vibrioides (strain ATCC 19089 / CIP 103742 / CB 15) (Caulobacter crescentus).